Here is a 505-residue protein sequence, read N- to C-terminus: MVDGSIHVPVQSHEGQHDNSSSLNEEIQTSQDPLGIVESYQESSTSDFDKSHYTHNSSIAAADSEYGSAFIQGQSSNGSEIKSERPSIDKKLDVNIDSHPIEPPPFEHDIGLPASQVPAAEEEVESTPKAKPLYFLLDKRFWIVFFLGQVLSLCITATNTFNGYMSGISNIPAFQTFLVYALLTLVYTPYTVFRMGFKKYFEMIFRHGWKYIIFAFFDVEGNYFVVLAYQYTNMLSASLLDSWATVAVVILSFIFLKVRYHWSQILGVVACIGGLVLLVVSDVISRGDYSAVNPGLGDGYMIIGATCYGVSNTLEEYFASKLPLYVVIGQLSLYGSIISIIQTFIFDRHHLYTLHWTSEMGGYLAGFILVMFLLYSLAPILFRMSSATFYNISLLTSDFWSLVIGIHVFGYHVYWLYPIAFVLIILGLFVYHVFVDATRESIKPWLKKGQGVDGVGTVRRPPSLVSSNDELNKKNDIVVAHHDNEVKERIYDAYLSVKNVFVRKS.

A disordered region spans residues 1–52 (MVDGSIHVPVQSHEGQHDNSSSLNEEIQTSQDPLGIVESYQESSTSDFDKSH). A compositionally biased stretch (polar residues) spans 18 to 32 (DNSSSLNEEIQTSQD). Transmembrane regions (helical) follow at residues 141-161 (FWIVFFLGQVLSLCITATNTF), 173-193 (AFQTFLVYALLTLVYTPYTVF), 208-228 (GWKYIIFAFFDVEGNYFVVLA), 235-255 (LSASLLDSWATVAVVILSFIF), 265-285 (ILGVVACIGGLVLLVVSDVIS), 290-310 (SAVNPGLGDGYMIIGATCYGV), 326-346 (VVIGQLSLYGSIISIIQTFIF), 362-382 (GYLAGFILVMFLLYSLAPILF), 389-409 (FYNISLLTSDFWSLVIGIHVF), and 415-435 (WLYPIAFVLIILGLFVYHVFV). Phosphoserine is present on residues Ser-463, Ser-466, and Ser-467.

It belongs to the SLC35F solute transporter family.

The protein localises to the golgi apparatus membrane. This is an uncharacterized protein from Schizosaccharomyces pombe (strain 972 / ATCC 24843) (Fission yeast).